The following is a 179-amino-acid chain: MNVSHASVHPVEDPPAAATEVENPPRVRMDDMEGMPGTLLGLALRFFQFLFAAAALCVMASTSDFPSVTAFCYLVAATGLQSLWSLALAMVDVYAIMVKRSLQNRRLVSLFAIGDGVTSTLTFAAACASAGITVLIDNDLNSCAQNHCVQFETSTALAFISWFAALPSFLFNFWSLASR.

The disordered stretch occupies residues 1 to 24 (MNVSHASVHPVEDPPAAATEVENP). Over 1 to 38 (MNVSHASVHPVEDPPAAATEVENPPRVRMDDMEGMPGT) the chain is Cytoplasmic. The chain crosses the membrane as a helical span at residues 39-59 (LLGLALRFFQFLFAAAALCVM). Residues 60–70 (ASTSDFPSVTA) are Extracellular-facing. Residues 71–91 (FCYLVAATGLQSLWSLALAMV) form a helical membrane-spanning segment. Over 92 to 115 (DVYAIMVKRSLQNRRLVSLFAIGD) the chain is Cytoplasmic. Residues 116-136 (GVTSTLTFAAACASAGITVLI) form a helical membrane-spanning segment. The Extracellular segment spans residues 137–155 (DNDLNSCAQNHCVQFETST). The chain crosses the membrane as a helical span at residues 156–176 (ALAFISWFAALPSFLFNFWSL). The Cytoplasmic segment spans residues 177–179 (ASR).

This sequence belongs to the Casparian strip membrane proteins (CASP) family. In terms of assembly, homodimer and heterodimers.

It is found in the cell membrane. This chain is CASP-like protein 5A2, found in Arabidopsis thaliana (Mouse-ear cress).